The following is a 707-amino-acid chain: U-box domain-containing protein 2 (707 aa).

Residues 239-313 (RVPSDFRCSL…ASWCETNNVY (75 aa)) enclose the U-box domain. ARM repeat units follow at residues 453–492 (TDNR…NLSI), 494–534 (DNNK…SLSV), 536–575 (EEYK…NLSI), 577–615 (HENK…NLAT), and 617–656 (REGK…QLCT).

It carries out the reaction S-ubiquitinyl-[E2 ubiquitin-conjugating enzyme]-L-cysteine + [acceptor protein]-L-lysine = [E2 ubiquitin-conjugating enzyme]-L-cysteine + N(6)-ubiquitinyl-[acceptor protein]-L-lysine.. It functions in the pathway protein modification; protein ubiquitination. In terms of biological role, functions as an E3 ubiquitin ligase. In Arabidopsis thaliana (Mouse-ear cress), this protein is U-box domain-containing protein 2 (PUB2).